The following is a 531-amino-acid chain: T-complex protein 1 subunit zeta (531 aa).

Alanine 2 bears the N-acetylalanine mark. Residue lysine 5 is modified to N6-acetyllysine. Glycine 39 is a binding site for ADP. Residue glycine 39 participates in ATP binding. A Mg(2+)-binding site is contributed by aspartate 90. Positions 91, 92, 93, 94, 158, and 159 each coordinate ADP. ATP-binding residues include glycine 91, threonine 92, and threonine 93. Position 199 is an N6-acetyllysine (lysine 199). Residue serine 205 is modified to Phosphoserine. Residue lysine 251 forms a Glycyl lysine isopeptide (Lys-Gly) (interchain with G-Cter in SUMO2) linkage. 4 positions are modified to N6-acetyllysine: lysine 287, lysine 365, lysine 377, and lysine 388. Alanine 411 lines the ADP pocket. ATP is bound by residues alanine 411, glycine 412, aspartate 496, and lysine 501. Aspartate 496 is a binding site for ADP.

Belongs to the TCP-1 chaperonin family. As to quaternary structure, component of the chaperonin-containing T-complex (TRiC), a hexadecamer composed of two identical back-to-back stacked rings enclosing a protein folding chamber. Each ring is made up of eight different subunits: TCP1/CCT1, CCT2, CCT3, CCT4, CCT5, CCT6A/CCT6, CCT7, CCT8. Interacts with PACRG.

It is found in the cytoplasm. It catalyses the reaction ATP + H2O = ADP + phosphate + H(+). Component of the chaperonin-containing T-complex (TRiC), a molecular chaperone complex that assists the folding of actin, tubulin and other proteins upon ATP hydrolysis. The TRiC complex mediates the folding of WRAP53/TCAB1, thereby regulating telomere maintenance. This is T-complex protein 1 subunit zeta (CCT6A) from Bos taurus (Bovine).